The chain runs to 181 residues: Putative J domain-containing protein R266 (181 aa).

The J domain occupies 6 to 70; it reads NYYQILDVDN…LKRLNYDSYL (65 aa).

This is Putative J domain-containing protein R266 from Acanthamoeba polyphaga (Amoeba).